The sequence spans 2440 residues: Nuclear receptor corepressor 1 (2440 aa).

The span at 1–18 (MSSSGYPPNQGAFSTEQS) shows a compositional bias: polar residues. 2 disordered regions span residues 1-177 (MSSS…SKLS) and 206-231 (QQQLEEEAAKPPEPEKPVSPPPVEQK). An interaction with ZBTB33 and HEXIM1 region spans residues 1 to 373 (MSSSGYPPNQ…QRGAGLSATI (373 aa)). The span at 51 to 64 (SQASQLLQQQQQQQ) shows a compositional bias: low complexity. Basic and acidic residues-rich tracts occupy residues 77–88 (PGSDRPQERRTS), 99–119 (VDHDSLESKRPRLEQVSDSHF), and 141–155 (ADAKKDPAFGGKHEA). Ser-172 is modified (phosphoserine). A coiled-coil region spans residues 174 to 216 (SKLSKEELIQSMDRVDREIAKVEQQILKLKKKQQQLEEEAAKP). A compositionally biased stretch (basic and acidic residues) spans 212–221 (EAAKPPEPEK). Ser-224 is modified (phosphoserine). The interaction with SIN3A/B stretch occupies residues 254–312 (FEGLGPKVELPLYNQPSDTKVYHENIKTNQVMRKKLILFFKRRNHARKQREQKICQRYD). Residues 299–328 (ARKQREQKICQRYDQLMEAWEKKVDRIENN) are a coiled coil. One can recognise an SANT 1 domain in the interval 435-486 (QFMNVWTDHEKEIFKDKFIQHPKNFGLIASYLERKSVPDCVLYYYLTKKNEN). Disordered stretches follow at residues 497–632 (KRRG…TEEE) and 677–915 (NLLQ…GSIL). The stretch at 501–557 (RNQQIARPSQEEKVEEKEEDKAEKTEKKEEEKKDEEEKDEKEDSKENTKEKDKIDGT) forms a coiled coil. Composition is skewed to basic and acidic residues over residues 509–531 (SQEEKVEEKEEDKAEKTEKKEEE) and 541–556 (KEDSKENTKEKDKIDG). The segment covering 592–605 (EAAAASAAAAAATE) has biased composition (low complexity). Residues 606–617 (EPPPPLPPPPEP) show a composition bias toward pro residues. The SANT 2 domain maps to 623–674 (VETSRWTEEEMEVAKKGLVEHGRNWAAIAKMVGTKSEAQCKNFYFNYKRRHN). Residues 698–708 (QCESVASTVSA) show a composition bias toward polar residues. Residues 709–728 (QEDEDIEASNEEENPEDSEV) are compositionally biased toward acidic residues. Over residues 752–768 (ELEPTTETAPSTSPSLA) the composition is skewed to low complexity. The span at 781–792 (ETQVNDSISAET) shows a compositional bias: polar residues. The segment covering 820–859 (DSVDVEVRVPENHASKVEGDNTKERDLDRASEKVEPRDED) has biased composition (basic and acidic residues). Polar residues-rich tracts occupy residues 864 to 883 (QQINAQRPEPQSDNDSSATC) and 906 to 915 (SLLNPTGSIL). The interval 988–1816 (RSSTSPCGTS…QGLPASRYNT (829 aa)) is interaction with ETO. A Phosphoserine modification is found at Ser-999. Positions 1022–1046 (VRLPTTRPTRPPPPLIPSSKTTVAS) are disordered. Lys-1106 participates in a covalent cross-link: Glycyl lysine isopeptide (Lys-Gly) (interchain with G-Cter in SUMO1); alternate. Lys-1106 is covalently cross-linked (Glycyl lysine isopeptide (Lys-Gly) (interchain with G-Cter in SUMO2); alternate). A Phosphoserine modification is found at Ser-1111. Lys-1184 participates in a covalent cross-link: Glycyl lysine isopeptide (Lys-Gly) (interchain with G-Cter in SUMO2). The segment at 1184-1204 (KGSISRMPIEDSSPEKGREEA) is disordered. Residues Ser-1195, Ser-1196, Ser-1249, Ser-1263, Ser-1281, and Ser-1322 each carry the phosphoserine modification. An N6-acetyllysine modification is found at Lys-1336. The residue at position 1367 (Thr-1367) is a Phosphothreonine. Residue Lys-1389 forms a Glycyl lysine isopeptide (Lys-Gly) (interchain with G-Cter in SUMO2) linkage. A Glycyl lysine isopeptide (Lys-Gly) (interchain with G-Cter in SUMO2); alternate cross-link involves residue Lys-1412. Lys-1412 is modified (N6-acetyllysine; alternate). The disordered stretch occupies residues 1440 to 1459 (AGETVRSRHTSVVSSGPSVL). Ser-1450 and Ser-1472 each carry phosphoserine. Residues 1488–1512 (YQNTMSRGSPMMNRTSDVTISSNKS) show a composition bias toward polar residues. Positions 1488–1554 (YQNTMSRGSP…SPFDPHHRGS (67 aa)) are disordered. The segment at 1501 to 2440 (RTSDVTISSN…QYETLSDSDD (940 aa)) is interaction with C1D. Lys-1518 is covalently cross-linked (Glycyl lysine isopeptide (Lys-Gly) (interchain with G-Cter in SUMO2)). At Ser-1592 the chain carries Phosphoserine. Disordered regions lie at residues 1690–1759 (PRPY…SPSP) and 1884–1922 (SSAFPSGKPQPHSSVVYSEAGKDKGPPPKSRYEEELRTR). 2 stretches are compositionally biased toward basic and acidic residues: residues 1712-1729 (AEREREREREKERERERI) and 1903-1921 (AGKDKGPPPKSRYEEELRT). The CORNR box 1 signature appears at 1933–1937 (IDVII). The tract at residues 1943 to 1969 (SDKDARERGSQSSDSSSSLSSHRYETP) is disordered. Over residues 1952 to 1963 (SQSSDSSSSLSS) the composition is skewed to low complexity. 2 positions are modified to phosphoserine: Ser-1977 and Ser-1981. The interval 2006–2041 (PTRQYEGPLHHYRPQQESPSPQQQLPPSSQAEGMGQ) is disordered. Over residues 2020–2035 (QQESPSPQQQLPPSSQ) the composition is skewed to low complexity. The tract at residues 2032 to 2115 (PSSQAEGMGQ…QAQSVHHQRP (84 aa)) is ID1. Positions 2047–2050 (RLIT) are required for interaction with RARA in the absence of its ligand. Positions 2055–2059 (ICQII) match the CORNR box 2 motif. Residues 2067–2086 (QVSSQTPQQPPTSTFQNSPS) are compositionally biased toward low complexity. The tract at residues 2067–2155 (QVSSQTPQQP…PYEPISPPQV (89 aa)) is disordered. Over residues 2087 to 2110 (ALVSTPVRTKTSNRYSPESQAQSV) the composition is skewed to polar residues. Residues Ser-2102, Ser-2120, Ser-2136, Ser-2151, and Ser-2184 each carry the phosphoserine modification. Positions 2124-2142 (LVDKSRGSRPGKSPERSHV) are enriched in basic and acidic residues. The ID2 stretch occupies residues 2212–2273 (IFRKLNSSGG…EDIIRKALMG (62 aa)). Positions 2263-2267 (LEDII) match the CORNR box 3 motif. The disordered stretch occupies residues 2287–2440 (SQPMGVVPGT…QYETLSDSDD (154 aa)). Residues 2296-2305 (TANTSVVTSG) show a composition bias toward polar residues. Thr-2399 is modified (phosphothreonine). Composition is skewed to polar residues over residues 2407-2418 (AVNQAAPHQQNR) and 2431-2440 (QYETLSDSDD). Residues Ser-2436 and Ser-2438 each carry the phosphoserine modification.

It belongs to the N-CoR nuclear receptor corepressors family. In terms of assembly, forms a large corepressor complex that contains SIN3A/B and histone deacetylases HDAC1 and HDAC2. This complex associates with the thyroid receptor (TR) and the retinoid acid receptor (RAR) in the absence of ligand. Interacts directly with RARA; the interaction is facilitated with RARA trimethylation. Component of the N-Cor repressor complex, at least composed of CBFA2T3, HEXIM1, NCOR1, NCOR2, HDAC3, TBL1X, TBL1XR1, CORO2A and GPS2. Interacts with ZBTB33; the interaction serves to recruit the N-CoR complex to promoter regions containing methylated CpG dinucleotides. Interacts with TRIM28 and KDM3A. Interacts (via the RD1 domain) with BAZ1A (via its N-terminal); the interaction corepresses a number of NCOR1-regulated genes. Interacts with BCL6, C1D, DACH1, HEXIM1, HDAC7, RORA, RORC, SAP30, SIAH2, SIN3A and SIN3B. May interact with DEAF1. Interacts with RXRA. Interacts with SETD5. Interacts with VDR. Interacts with ZBTB7A. Interacts with AR. Interacts with HDAC3. Ubiquitinated; mediated by SIAH2 and leading to its subsequent proteasomal degradation.

It localises to the nucleus. In terms of biological role, mediates transcriptional repression by certain nuclear receptors. Part of a complex which promotes histone deacetylation and the formation of repressive chromatin structures which may impede the access of basal transcription factors. Participates in the transcriptional repressor activity produced by BCL6. Recruited by ZBTB7A to the androgen response elements/ARE on target genes, negatively regulates androgen receptor signaling and androgen-induced cell proliferation. Mediates the NR1D1-dependent repression and circadian regulation of TSHB expression. The NCOR1-HDAC3 complex regulates the circadian expression of the core clock gene ARTNL/BMAL1 and the genes involved in lipid metabolism in the liver. The protein is Nuclear receptor corepressor 1 (NCOR1) of Homo sapiens (Human).